The following is a 279-amino-acid chain: Ribosomal RNA small subunit methyltransferase A (279 aa).

S-adenosyl-L-methionine contacts are provided by His15, Leu17, Gly42, Glu64, Asp89, and Asn109.

This sequence belongs to the class I-like SAM-binding methyltransferase superfamily. rRNA adenine N(6)-methyltransferase family. RsmA subfamily.

The protein localises to the cytoplasm. It catalyses the reaction adenosine(1518)/adenosine(1519) in 16S rRNA + 4 S-adenosyl-L-methionine = N(6)-dimethyladenosine(1518)/N(6)-dimethyladenosine(1519) in 16S rRNA + 4 S-adenosyl-L-homocysteine + 4 H(+). Specifically dimethylates two adjacent adenosines (A1518 and A1519) in the loop of a conserved hairpin near the 3'-end of 16S rRNA in the 30S particle. May play a critical role in biogenesis of 30S subunits. The protein is Ribosomal RNA small subunit methyltransferase A of Prochlorococcus marinus (strain SARG / CCMP1375 / SS120).